Consider the following 626-residue polypeptide: MIPANASARKGPEGKYPLHYLVWHNRHRELEKEVRAGQVDIEQLDPRGRTPLHLATTLGHLECARVLLAHGADVGRENRSGWTVLQEAVSTRDLELVQLVLRYRDYQRVVKRLAGIPMLLEKLRKAQDFYVEMKWEFTSWVPLVSKICPSDTYKVWKSGQNLRVDTTLLGFDHMTWQRGNRSFVFRGQDTSAVVMEIDHDRRVVYMETLALAGQDRELLLAAAQPSEEQVLSRLTAPVVTTQLDTKNISFERNKTGILGWRSEKTEMVNGYEAKVYGASNVELITRTRTEHLSEQHKGKVKGCKTPLQSFLGIAEQHGGPQNGTLITQTLSQANPPAITAEEYFNPNFELGNRAMGRPMELTTKTQKFKAKLWLCEEHPLSLCEQVAPIIDLMAVSNALFAKLRDFITLRLPPGFPVKIEIPIFHILNARITFGNLNGCDEPVPSVRGSPGSETPSPGSDSSSVSSSSSTTSCRACEISPALFEAPRGYSVLGGQREAVPRDEDDDLLRFAIQQSLLEAGSEYDQVTIWEALTNSKPGTHPMSYEGRRQDRSAPPTPQRQPMPPAPVPSPRPSPGPGSSSHVFRSYDEQLRLAMELSAQEQEERRRRVRQEEEELERILRLSLTEQ.

Methionine 1 carries the N-acetylmethionine modification. 2 ANK repeats span residues arginine 47–arginine 76 and serine 80–valine 109. The disordered stretch occupies residues proline 442–threonine 470. The span at glycine 448–threonine 470 shows a compositional bias: low complexity. Residues glutamate 503–glutamate 522 enclose the UIM 1 domain. The interval asparagine 534–glutamate 614 is disordered. Residues proline 554–glycine 575 show a composition bias toward pro residues. UIM domains follow at residues serine 585–arginine 604 and glutamine 610–glutamine 626.

As to quaternary structure, interacts with EGFR (ubiquitinated); the interaction is direct and may regulate EGFR internalization.

It localises to the cell membrane. Its subcellular location is the late endosome. The protein resides in the early endosome. In terms of biological role, ubiquitin-binding protein that specifically recognizes and binds 'Lys-63'-linked ubiquitin. Does not bind 'Lys-48'-linked ubiquitin. Positively regulates the internalization of ligand-activated EGFR by binding to the Ub moiety of ubiquitinated EGFR at the cell membrane. This chain is Ankyrin repeat domain-containing protein 13B (Ankrd13b), found in Mus musculus (Mouse).